The following is a 360-amino-acid chain: Dual-specificity RNA methyltransferase RlmN (360 aa).

Catalysis depends on Glu89, which acts as the Proton acceptor. The region spanning 95–330 is the Radical SAM core domain; that stretch reads DSGRGTLCVS…TRVTRGQDID (236 aa). The cysteines at positions 102 and 333 are disulfide-linked. Residues Cys109, Cys113, and Cys116 each contribute to the [4Fe-4S] cluster site. S-adenosyl-L-methionine is bound by residues 159–160, Ser191, 213–215, and Asn290; these read GE and SLH. Cys333 serves as the catalytic S-methylcysteine intermediate.

This sequence belongs to the radical SAM superfamily. RlmN family. Requires [4Fe-4S] cluster as cofactor.

It is found in the cytoplasm. The enzyme catalyses adenosine(2503) in 23S rRNA + 2 reduced [2Fe-2S]-[ferredoxin] + 2 S-adenosyl-L-methionine = 2-methyladenosine(2503) in 23S rRNA + 5'-deoxyadenosine + L-methionine + 2 oxidized [2Fe-2S]-[ferredoxin] + S-adenosyl-L-homocysteine. The catalysed reaction is adenosine(37) in tRNA + 2 reduced [2Fe-2S]-[ferredoxin] + 2 S-adenosyl-L-methionine = 2-methyladenosine(37) in tRNA + 5'-deoxyadenosine + L-methionine + 2 oxidized [2Fe-2S]-[ferredoxin] + S-adenosyl-L-homocysteine. Specifically methylates position 2 of adenine 2503 in 23S rRNA and position 2 of adenine 37 in tRNAs. m2A2503 modification seems to play a crucial role in the proofreading step occurring at the peptidyl transferase center and thus would serve to optimize ribosomal fidelity. The protein is Dual-specificity RNA methyltransferase RlmN of Alkalilimnicola ehrlichii (strain ATCC BAA-1101 / DSM 17681 / MLHE-1).